A 139-amino-acid chain; its full sequence is Small ribosomal subunit protein uS12 (139 aa).

It belongs to the universal ribosomal protein uS12 family. In terms of assembly, part of the 30S ribosomal subunit. Contacts proteins S8 and S17. May interact with IF1 in the 30S initiation complex.

With S4 and S5 plays an important role in translational accuracy. Functionally, interacts with and stabilizes bases of the 16S rRNA that are involved in tRNA selection in the A site and with the mRNA backbone. Located at the interface of the 30S and 50S subunits, it traverses the body of the 30S subunit contacting proteins on the other side and probably holding the rRNA structure together. The combined cluster of proteins S8, S12 and S17 appears to hold together the shoulder and platform of the 30S subunit. The sequence is that of Small ribosomal subunit protein uS12 from Mycoplasma pneumoniae (strain ATCC 29342 / M129 / Subtype 1) (Mycoplasmoides pneumoniae).